The chain runs to 259 residues: 1,2-dihydroxy-1,2-dihydronaphthalene dehydrogenase (259 aa).

Residues alanine 8–valine 35 and aspartate 58 contribute to the NAD(+) site. Serine 140 is a binding site for substrate. The Proton acceptor role is filled by tyrosine 153. Lysine 157 lines the NAD(+) pocket.

It belongs to the short-chain dehydrogenases/reductases (SDR) family.

It carries out the reaction (1R,2S)-1,2-dihydronaphthalene-1,2-diol + NAD(+) = naphthalene-1,2-diol + NADH + H(+). The protein operates within aromatic compound metabolism; naphthalene degradation. Functionally, catalyzes the oxidation of naphthalene dihydrodiol into 1,2-dihydroxynaphthalene. In Ralstonia sp, this protein is 1,2-dihydroxy-1,2-dihydronaphthalene dehydrogenase.